The primary structure comprises 544 residues: Probable protein kinase UbiB (544 aa).

Residues glutamate 123–leucine 501 form the Protein kinase domain. Residues leucine 129–valine 137 and lysine 152 contribute to the ATP site. Aspartate 287 functions as the Proton acceptor in the catalytic mechanism. The next 2 helical transmembrane spans lie at alanine 496 to valine 516 and alanine 519 to tryptophan 539.

This sequence belongs to the ABC1 family. UbiB subfamily.

It is found in the cell inner membrane. The protein operates within cofactor biosynthesis; ubiquinone biosynthesis [regulation]. Functionally, is probably a protein kinase regulator of UbiI activity which is involved in aerobic coenzyme Q (ubiquinone) biosynthesis. In Vibrio parahaemolyticus serotype O3:K6 (strain RIMD 2210633), this protein is Probable protein kinase UbiB.